We begin with the raw amino-acid sequence, 439 residues long: uncharacterized protein (439 aa).

CBS domains are found at residues 195–254 (LTPA…SIEK) and 256–314 (MTKN…KQPQ).

This is an uncharacterized protein from Bacillus subtilis (strain 168).